The following is a 471-amino-acid chain: Elongation factor 1-alpha (471 aa).

A tr-type G domain is found at 10–239 (KPRLNACFIG…EALNYQDVPE (230 aa)). A G1 region spans residues 19–26 (GHVDSGKS). 19–26 (GHVDSGKS) lines the GTP pocket. Residues 75–79 (GITIT) are G2. The G3 stretch occupies residues 96–99 (DCPG). Residues 96-100 (DCPGH) and 156-159 (NKMD) each bind GTP. The interval 156–159 (NKMD) is G4. The segment at 196–198 (SAF) is G5.

It belongs to the TRAFAC class translation factor GTPase superfamily. Classic translation factor GTPase family. EF-Tu/EF-1A subfamily. Component of the eukaryotic elongation factor 1 complex (eEF1).

The protein resides in the cytoplasm. It participates in protein biosynthesis; polypeptide chain elongation. GTP-binding component of the eukaryotic elongation factor 1 complex (eEF1). In its active GTP-bound form, binds to and delivers aminoacyl-tRNA to the A-site of ribosomes during protein biosynthesis. In the presence of a correct codon-anticodon match between the aminoacyl-tRNA and the A-site codon of the ribosome-bound mRNA, the ribosome acts as a GTPase activator and the GTP is hydrolyzed. The inactive GDP-bound form leaves the ribosome and must be recycled by its guanine nucleotide exchange factor (GEF) (eEF1B subcomplex) before binding another molecule of aminoacyl-tRNA. Required for nuclear export of aminoacyl-tRNAs. May also be involved in translational quality control by targeting cotranslationally damaged proteins to the proteasome. This chain is Elongation factor 1-alpha (TEF1), found in Encephalitozoon cuniculi (strain GB-M1) (Microsporidian parasite).